We begin with the raw amino-acid sequence, 93 residues long: Pyrimidine/purine nucleoside phosphorylase (93 aa).

This sequence belongs to the nucleoside phosphorylase PpnP family.

The enzyme catalyses a purine D-ribonucleoside + phosphate = a purine nucleobase + alpha-D-ribose 1-phosphate. The catalysed reaction is adenosine + phosphate = alpha-D-ribose 1-phosphate + adenine. It carries out the reaction cytidine + phosphate = cytosine + alpha-D-ribose 1-phosphate. It catalyses the reaction guanosine + phosphate = alpha-D-ribose 1-phosphate + guanine. The enzyme catalyses inosine + phosphate = alpha-D-ribose 1-phosphate + hypoxanthine. The catalysed reaction is thymidine + phosphate = 2-deoxy-alpha-D-ribose 1-phosphate + thymine. It carries out the reaction uridine + phosphate = alpha-D-ribose 1-phosphate + uracil. It catalyses the reaction xanthosine + phosphate = alpha-D-ribose 1-phosphate + xanthine. Catalyzes the phosphorolysis of diverse nucleosides, yielding D-ribose 1-phosphate and the respective free bases. Can use uridine, adenosine, guanosine, cytidine, thymidine, inosine and xanthosine as substrates. Also catalyzes the reverse reactions. The polypeptide is Pyrimidine/purine nucleoside phosphorylase (Pseudomonas aeruginosa (strain LESB58)).